The chain runs to 345 residues: Meiotic recombination protein rec12 (345 aa).

The Topo IIA-type catalytic domain occupies 5–137; it reads DKKKVVRSWI…LNVEASAKGL (133 aa). The active-site O-(5'-phospho-DNA)-tyrosine intermediate is Tyr98. Residues Glu179 and Asp229 each contribute to the Mg(2+) site.

Belongs to the TOP6A family. As to quaternary structure, component of the DSB catalytic core (DSBC) complex, composed of at least rec12, rec6 and rec14. The complex interacts with mde2. It depends on Mg(2+) as a cofactor.

It localises to the cytoplasm. The protein localises to the nucleus. The enzyme catalyses ATP-dependent breakage, passage and rejoining of double-stranded DNA.. Required for formation of the double-strand breaks (DSBs) that initiate meiotic recombination. Required for crossover recombination and chiasmatic segregation of chromosomes during meiosis I. Also involved in the faithful equational segregation of chromosomes during meiosis II. This chain is Meiotic recombination protein rec12, found in Schizosaccharomyces pombe (strain 972 / ATCC 24843) (Fission yeast).